Consider the following 186-residue polypeptide: Large ribosomal subunit protein uL5 (186 aa).

It belongs to the universal ribosomal protein uL5 family. In terms of assembly, part of the 50S ribosomal subunit; part of the 5S rRNA/L5/L18/L25 subcomplex. Contacts the 5S rRNA and the P site tRNA. Forms a bridge to the 30S subunit in the 70S ribosome.

In terms of biological role, this is one of the proteins that bind and probably mediate the attachment of the 5S RNA into the large ribosomal subunit, where it forms part of the central protuberance. In the 70S ribosome it contacts protein S13 of the 30S subunit (bridge B1b), connecting the 2 subunits; this bridge is implicated in subunit movement. Contacts the P site tRNA; the 5S rRNA and some of its associated proteins might help stabilize positioning of ribosome-bound tRNAs. This is Large ribosomal subunit protein uL5 from Karelsulcia muelleri (strain GWSS) (Sulcia muelleri).